The primary structure comprises 227 residues: Cytochrome c oxidase subunit 2 (227 aa).

The Mitochondrial intermembrane segment spans residues 1-26 (MATWSNFNLQNSASPLMEQIIFFHDH). Residues 27–51 (TLVILIMITILVGYLMISLFFNSYI) traverse the membrane as a helical segment. At 52–62 (NRFLLEGQMIE) the chain is on the mitochondrial matrix side. Residues 63–81 (LIWTILPAITLIFIALPSL) traverse the membrane as a helical segment. At 82–227 (RLLYLLDELN…NFINWINNYS (146 aa)) the chain is on the mitochondrial intermembrane side. Cu cation-binding residues include His-161, Cys-196, Glu-198, Cys-200, His-204, and Met-207. A Mg(2+)-binding site is contributed by Glu-198.

The protein belongs to the cytochrome c oxidase subunit 2 family. In terms of assembly, component of the cytochrome c oxidase (complex IV, CIV), a multisubunit enzyme composed of a catalytic core of 3 subunits and several supernumerary subunits. The complex exists as a monomer or a dimer and forms supercomplexes (SCs) in the inner mitochondrial membrane with ubiquinol-cytochrome c oxidoreductase (cytochrome b-c1 complex, complex III, CIII). Cu cation is required as a cofactor.

It is found in the mitochondrion inner membrane. It catalyses the reaction 4 Fe(II)-[cytochrome c] + O2 + 8 H(+)(in) = 4 Fe(III)-[cytochrome c] + 2 H2O + 4 H(+)(out). Its function is as follows. Component of the cytochrome c oxidase, the last enzyme in the mitochondrial electron transport chain which drives oxidative phosphorylation. The respiratory chain contains 3 multisubunit complexes succinate dehydrogenase (complex II, CII), ubiquinol-cytochrome c oxidoreductase (cytochrome b-c1 complex, complex III, CIII) and cytochrome c oxidase (complex IV, CIV), that cooperate to transfer electrons derived from NADH and succinate to molecular oxygen, creating an electrochemical gradient over the inner membrane that drives transmembrane transport and the ATP synthase. Cytochrome c oxidase is the component of the respiratory chain that catalyzes the reduction of oxygen to water. Electrons originating from reduced cytochrome c in the intermembrane space (IMS) are transferred via the dinuclear copper A center (CU(A)) of subunit 2 and heme A of subunit 1 to the active site in subunit 1, a binuclear center (BNC) formed by heme A3 and copper B (CU(B)). The BNC reduces molecular oxygen to 2 water molecules using 4 electrons from cytochrome c in the IMS and 4 protons from the mitochondrial matrix. The sequence is that of Cytochrome c oxidase subunit 2 (COII) from Choristoneura rosaceana (Oblique banded leafroller).